The chain runs to 80 residues: Large ribosomal subunit protein uL29 (80 aa).

Belongs to the universal ribosomal protein uL29 family.

The polypeptide is Large ribosomal subunit protein uL29 (Saccharopolyspora erythraea (strain ATCC 11635 / DSM 40517 / JCM 4748 / NBRC 13426 / NCIMB 8594 / NRRL 2338)).